A 545-amino-acid polypeptide reads, in one-letter code: MKKNGCLLLFAYSLLSFSLTAATIDETYDESLFIKSFSSRYSYVSFAFEIGASTDSTHSSVFSESSFSLFPLSIARVMDECQVSELHIRATRGRWDYENWKESPDNGFYSGGLGFEVWAFMANDPSMKYWLKLTNQLSGLLCASLNYIDSSNTYQPQLSYPGSFSFSNNTQYFASLPQEDVCTENLSPLFKLLPCKRKAGIASLLDSHLFFDTDWHSFSIDVYPSENQSLASVKMGIIIQAVVDVERNGRRKGKTTFQPPSEYCHDEDMDSLHCLMSGYSTEHHTVDDLFHKVPKERCLLSSTFSDVFVSNGDKIDTFSLDEAANIQIPIQSTSDNHTVTVDRSLSNDGNHWGSLSSTIYNPSSSPRTIVYFEKFPWFVRVYLHTLTITLNGTRINTKDFIEKLYYQPLRDRKAGTMMEIQFSIPPHTNLIVHFNVEKTPLRLDEYPPDANRGYNLPPAIISVFDENNTKLCSLRTAALLMFIPTPDFSMPYNVIIFTSTVIALTFGGIFNLLTRRFVPQQSKFQNRQPSMLQRLKEKIFHKKRG.

Residues 1-22 (MKKNGCLLLFAYSLLSFSLTAA) form the signal peptide. Residues 23–493 (TIDETYDESL…PTPDFSMPYN (471 aa)) lie on the Lumenal side of the membrane. N-linked (GlcNAc...) asparagine glycosylation is found at Asn-168, Asn-227, Asn-336, Asn-391, and Asn-467. The chain crosses the membrane as a helical span at residues 494–514 (VIIFTSTVIALTFGGIFNLLT). The Cytoplasmic portion of the chain corresponds to 515–545 (RRFVPQQSKFQNRQPSMLQRLKEKIFHKKRG).

Belongs to the PIGT family. As to quaternary structure, forms a complex with PIG-S homolog, PIG-U homolog and GPI8. The disulfide bond between PIGK/GPI8 and PIGT is important for normal enzyme activity.

Its subcellular location is the endoplasmic reticulum membrane. Its pathway is glycolipid biosynthesis; glycosylphosphatidylinositol-anchor biosynthesis. Its function is as follows. Component of the GPI transamidase complex. Involved in transfer of GPI to proteins. This is GPI transamidase component PIG-T homolog (gpi16) from Schizosaccharomyces pombe (strain 972 / ATCC 24843) (Fission yeast).